The sequence spans 1150 residues: ATP-dependent DNA helicase Q-like 4B (1150 aa).

Disordered regions lie at residues Thr124–Phe143 and Cys154–Ser179. A compositionally biased stretch (low complexity) spans Thr132–Thr142. Residues Asp327–Leu361 adopt a coiled-coil conformation. The span at Tyr416–Ser428 shows a compositional bias: basic and acidic residues. Residues Tyr416–Trp446 form a disordered region. The region spanning Ile478 to Val653 is the Helicase ATP-binding domain. Met491–Ser498 is an ATP binding site. A DEAH box motif is present at residues Asp597–His600. A Helicase C-terminal domain is found at Asp678–Ala823. Residues Ser1029–Thr1111 enclose the HRDC domain. Positions Asn1106 to Lys1150 are disordered. Over residues Ser1141–Lys1150 the composition is skewed to basic residues.

Belongs to the helicase family. RecQ subfamily. Mg(2+) is required as a cofactor. It depends on Mn(2+) as a cofactor. Mostly expressed in roots, seedlings, shoots, shoot apical mersitem, flowers, and siliques.

It localises to the nucleus. The enzyme catalyses Couples ATP hydrolysis with the unwinding of duplex DNA by translocating in the 3'-5' direction.. The catalysed reaction is ATP + H2O = ADP + phosphate + H(+). In terms of biological role, 3'-5' DNA helicase that may play a role in the repair of DNA. Required to promote but not to suppress crossovers. In Arabidopsis thaliana (Mouse-ear cress), this protein is ATP-dependent DNA helicase Q-like 4B (RECQL4B).